A 566-amino-acid polypeptide reads, in one-letter code: Peroxisomal leader peptide-processing protease (566 aa).

Residues 319–531 (ALAALLPPEV…LQPALQQYSQ (213 aa)) form a serine protease region. Catalysis depends on charge relay system residues His372, Asp408, and Ser481.

This sequence belongs to the peptidase S1B family. In terms of assembly, homodimer. Forms a heterodimer with the C-terminal cleavage product (45 kDa form). Forms a heterodimer with the N-terminal cleavage product (15 kDa form). Interacts with PEX5. Interacts with LONP2. In terms of processing, self-cleavage gives rise to an N-terminal 15-kDa fragment and C-terminal 45-kDa fragment upon import into the peroxisomes. The full-lengh TYSND1 is the active the proteolytic processing of PTS1- and PTS2-proteins and in self-cleavage, and intermolecular self-cleavage of TYSND1 down-regulates its protease activity.

The protein localises to the peroxisome. In terms of biological role, peroxisomal protease that mediates both the removal of the leader peptide from proteins containing a PTS2 target sequence and processes several PTS1-containing proteins. Catalyzes the processing of PTS1-proteins involved in the peroxisomal beta-oxidation of fatty acids. The chain is Peroxisomal leader peptide-processing protease (TYSND1) from Homo sapiens (Human).